The sequence spans 236 residues: Large ribosomal subunit protein uL2 (236 aa).

The disordered stretch occupies residues 198-236 (DHPFGGGGRQHPGRPKTVSRGTPPGRKVGSIAARRTGKR).

The protein belongs to the universal ribosomal protein uL2 family. In terms of assembly, part of the 50S ribosomal subunit. Forms a bridge to the 30S subunit in the 70S ribosome.

Functionally, one of the primary rRNA binding proteins. Required for association of the 30S and 50S subunits to form the 70S ribosome, for tRNA binding and peptide bond formation. It has been suggested to have peptidyltransferase activity; this is somewhat controversial. Makes several contacts with the 16S rRNA in the 70S ribosome. In Methanothrix thermoacetophila (strain DSM 6194 / JCM 14653 / NBRC 101360 / PT) (Methanosaeta thermophila), this protein is Large ribosomal subunit protein uL2.